We begin with the raw amino-acid sequence, 303 residues long: Ribosomal RNA small subunit methyltransferase H (303 aa).

Residues 33 to 35, D52, F78, D99, and Q106 each bind S-adenosyl-L-methionine; that span reads GGH.

Belongs to the methyltransferase superfamily. RsmH family.

The protein resides in the cytoplasm. It catalyses the reaction cytidine(1402) in 16S rRNA + S-adenosyl-L-methionine = N(4)-methylcytidine(1402) in 16S rRNA + S-adenosyl-L-homocysteine + H(+). Functionally, specifically methylates the N4 position of cytidine in position 1402 (C1402) of 16S rRNA. The protein is Ribosomal RNA small subunit methyltransferase H of Phytoplasma australiense.